A 229-amino-acid chain; its full sequence is Probable septum site-determining protein MinC (229 aa).

This sequence belongs to the MinC family. As to quaternary structure, interacts with MinD and FtsZ.

Its function is as follows. Cell division inhibitor that blocks the formation of polar Z ring septums. Rapidly oscillates between the poles of the cell to destabilize FtsZ filaments that have formed before they mature into polar Z rings. Prevents FtsZ polymerization. The protein is Probable septum site-determining protein MinC of Ruminiclostridium cellulolyticum (strain ATCC 35319 / DSM 5812 / JCM 6584 / H10) (Clostridium cellulolyticum).